We begin with the raw amino-acid sequence, 707 residues long: Coiled-coil domain-containing protein 177 (707 aa).

2 disordered regions span residues Met1–Arg65 and Pro183–Thr294. Composition is skewed to low complexity over residues Ala38 to Ala49, Pro183 to Ala215, and Ala243 to Glu258. Phosphoserine is present on Ser311. Positions Gly364–Glu605 form a coiled coil. Disordered stretches follow at residues His372–Glu426, Lys454–His581, Gln597–Asp637, and Glu652–Lys707. Composition is skewed to basic and acidic residues over residues Arg377 to Arg392, Val399 to Glu426, Lys454 to Gln484, Gln491 to Ala514, Glu543 to His581, Arg618 to Asp637, and Glu652 to Ala664. Low complexity predominate over residues Leu665–Ser675. Residues His677–Lys707 are compositionally biased toward basic and acidic residues.

The chain is Coiled-coil domain-containing protein 177 (CCDC177) from Homo sapiens (Human).